The primary structure comprises 121 residues: Small ribosomal subunit protein uS13 (121 aa).

Residues 96–121 (PVRGQNTKNNARTRKGKAVAIAGKKK) form a disordered region. Residues 106 to 121 (ARTRKGKAVAIAGKKK) show a composition bias toward basic residues.

Belongs to the universal ribosomal protein uS13 family. In terms of assembly, part of the 30S ribosomal subunit. Forms a loose heterodimer with protein S19. Forms two bridges to the 50S subunit in the 70S ribosome.

Its function is as follows. Located at the top of the head of the 30S subunit, it contacts several helices of the 16S rRNA. In the 70S ribosome it contacts the 23S rRNA (bridge B1a) and protein L5 of the 50S subunit (bridge B1b), connecting the 2 subunits; these bridges are implicated in subunit movement. Contacts the tRNAs in the A and P-sites. The chain is Small ribosomal subunit protein uS13 from Streptococcus suis (strain 05ZYH33).